A 404-amino-acid chain; its full sequence is Argininosuccinate synthase (404 aa).

ATP contacts are provided by residues A10–S18 and A37. Residues Y89 and S94 each contribute to the L-citrulline site. G119 provides a ligand contact to ATP. T121, N125, and D126 together coordinate L-aspartate. N125 serves as a coordination point for L-citrulline. Residues R129, S178, S187, E263, and Y275 each contribute to the L-citrulline site.

Belongs to the argininosuccinate synthase family. Type 1 subfamily. In terms of assembly, homotetramer.

The protein resides in the cytoplasm. It catalyses the reaction L-citrulline + L-aspartate + ATP = 2-(N(omega)-L-arginino)succinate + AMP + diphosphate + H(+). It functions in the pathway amino-acid biosynthesis; L-arginine biosynthesis; L-arginine from L-ornithine and carbamoyl phosphate: step 2/3. This chain is Argininosuccinate synthase, found in Photobacterium profundum (strain SS9).